A 452-amino-acid polypeptide reads, in one-letter code: Imaginal disk growth factor 6 (452 aa).

The signal sequence occupies residues 1 to 18 (MIIKALAIVSLCLASIQA). Positions 29–452 (KHLVCYYDSA…LRAIKYRLTN (424 aa)) constitute a GH18 domain. Cys33 and Cys60 are joined by a disulfide. The N-linked (GlcNAc...) asparagine glycan is linked to Asn233. Cys352 and Cys435 are disulfide-bonded.

The protein belongs to the glycosyl hydrolase 18 family. IDGF subfamily. Glycosylated. As to expression, in larvae, it is expressed in the fat body and by hemocytes.

The protein localises to the secreted. Functionally, probably required to stimulate the proliferation, polarization and motility of imaginal disk cells. May act by stabilizing the binding of insulin-like peptides to its receptor through a simultaneous interaction with both molecules to form a multiprotein signaling complex. This is Imaginal disk growth factor 6 from Drosophila melanogaster (Fruit fly).